An 892-amino-acid chain; its full sequence is Protein argonaute 11 (892 aa).

Positions 1-17 (MSSRGGGVGGRRGGPGG) are enriched in gly residues. 2 disordered regions span residues 1 to 68 (MSSR…ALQP) and 86 to 117 (MEAR…GALP). Positions 86 to 107 (MEAREGASSSSSASAPAVGEVE) are enriched in low complexity. In terms of domain architecture, PAZ spans 248 to 362 (SLKQFLAGTY…LPMEVCRIVK (115 aa)). The region spanning 541 to 848 (LLVIVLPDAN…AASRARHYLE (308 aa)) is the Piwi domain. The tract at residues 850–876 (GSLPDHGSSSASAAGGSRRNDRGVPVK) is disordered. The span at 856 to 866 (GSSSASAAGGS) shows a compositional bias: low complexity. A compositionally biased stretch (basic and acidic residues) spans 867-876 (RRNDRGVPVK).

It belongs to the argonaute family. Ago subfamily.

Its function is as follows. Probably involved in the RNA silencing pathway. May bind to short RNAs such as microRNAs (miRNAs) or short interfering RNAs (siRNAs), and represses the translation of mRNAs which are complementary to them. The polypeptide is Protein argonaute 11 (AGO11) (Oryza sativa subsp. japonica (Rice)).